Reading from the N-terminus, the 299-residue chain is KATNB1-like protein 1 (299 aa).

Residues 8 to 15 (VKKRNFSN) carry the Nuclear localization signal motif. The residue at position 56 (Ser-56) is a Phosphoserine.

In terms of assembly, interacts with KATNA1 and KATNAL1; these interactions are competed by KATNB1 which has a higher affinity for them.

It is found in the nucleus. It localises to the cytoplasm. Its subcellular location is the cytoskeleton. The protein localises to the spindle pole. Its function is as follows. Regulates microtubule-severing activity of KATNAL1 in a concentration-dependent manner in vitro. This is KATNB1-like protein 1 (Katnbl1) from Mus musculus (Mouse).